The sequence spans 417 residues: Solute carrier family 25 member 46-A (417 aa).

The span at Met-1–Glu-13 shows a compositional bias: basic and acidic residues. Residues Met-1–Ala-90 are disordered. A compositionally biased stretch (low complexity) spans Ser-31–Ser-41. The stretch at Gln-95–Pro-186 is one Solcar 1 repeat. 6 consecutive transmembrane segments (helical) span residues Phe-102 to Leu-122, Met-162 to Phe-182, Ile-198 to Ala-218, Leu-257 to Val-277, Phe-313 to Leu-333, and Leu-382 to Leu-402. Residues Glu-310–Thr-415 form a Solcar 2 repeat.

This sequence belongs to the mitochondrial carrier (TC 2.A.29) family.

It localises to the mitochondrion outer membrane. Functionally, may play a role in mitochondrial dynamics by controlling mitochondrial membrane fission. In Xenopus laevis (African clawed frog), this protein is Solute carrier family 25 member 46-A (slc25a46-a).